The sequence spans 200 residues: Recombination protein RecR (200 aa).

A C4-type zinc finger spans residues 57-72; it reads CRQCRTLTEEELCPQC. One can recognise a Toprim domain in the interval 80–175; sequence TLLCVVEGPM…ITSRIAHGVP (96 aa).

It belongs to the RecR family.

Functionally, may play a role in DNA repair. It seems to be involved in an RecBC-independent recombinational process of DNA repair. It may act with RecF and RecO. The chain is Recombination protein RecR from Pseudomonas fluorescens (strain SBW25).